The primary structure comprises 208 residues: Holliday junction branch migration complex subunit RuvA (208 aa).

Positions 1–64 (MIGKLKGIVD…EDMIRLYGFR (64 aa)) are domain I. The domain II stretch occupies residues 65-143 (SDAEREWFRL…AFAPVDPALV (79 aa)). A flexible linker region spans residues 144–152 (ALTGAVEDR). A domain III region spans residues 153–208 (TAPQPVADAISALVNLGYPQVQASAAIAAALKGLGDGAETVEAKTLIRLGLRELAR).

It belongs to the RuvA family. Homotetramer. Forms an RuvA(8)-RuvB(12)-Holliday junction (HJ) complex. HJ DNA is sandwiched between 2 RuvA tetramers; dsDNA enters through RuvA and exits via RuvB. An RuvB hexamer assembles on each DNA strand where it exits the tetramer. Each RuvB hexamer is contacted by two RuvA subunits (via domain III) on 2 adjacent RuvB subunits; this complex drives branch migration. In the full resolvosome a probable DNA-RuvA(4)-RuvB(12)-RuvC(2) complex forms which resolves the HJ.

The protein resides in the cytoplasm. The RuvA-RuvB-RuvC complex processes Holliday junction (HJ) DNA during genetic recombination and DNA repair, while the RuvA-RuvB complex plays an important role in the rescue of blocked DNA replication forks via replication fork reversal (RFR). RuvA specifically binds to HJ cruciform DNA, conferring on it an open structure. The RuvB hexamer acts as an ATP-dependent pump, pulling dsDNA into and through the RuvAB complex. HJ branch migration allows RuvC to scan DNA until it finds its consensus sequence, where it cleaves and resolves the cruciform DNA. The chain is Holliday junction branch migration complex subunit RuvA from Methylorubrum populi (strain ATCC BAA-705 / NCIMB 13946 / BJ001) (Methylobacterium populi).